A 257-amino-acid polypeptide reads, in one-letter code: Distal membrane-arm assembly complex protein 2 (257 aa).

A Phosphoserine modification is found at Ser253.

The protein belongs to the ATP synthase subunit s family. As to quaternary structure, interacts with incompletely assembled mitochondrial NADH:ubiquinone oxidoreductase complex (complex I).

It localises to the mitochondrion. Its function is as follows. Required for the assembly of the mitochondrial NADH:ubiquinone oxidoreductase complex (complex I). Involved in the assembly of the distal region of complex I. The chain is Distal membrane-arm assembly complex protein 2 from Homo sapiens (Human).